We begin with the raw amino-acid sequence, 178 residues long: MGLELVNAGNNLPEEINVIIEIPKDSEPVKYEVDKASGAIFVDRILSTPMRYPCNYGYVPNTLCGDGDPVDVMVVLPLPLVPGSVVRCRPVGVLQMKDEAGNDEKLLAVPVSKIFSGYSHIEDINQVSAHWLERIGHFFEHYKDLEKGKWVEIDGWGNATTAKQILTNAVQRYKDTLP.

Residues K30, R44, and Y56 each contribute to the substrate site. Positions 66, 71, and 103 each coordinate Mg(2+). Position 142 (Y142) interacts with substrate.

The protein belongs to the PPase family. Homohexamer. Mg(2+) is required as a cofactor.

It localises to the cytoplasm. It carries out the reaction diphosphate + H2O = 2 phosphate + H(+). Functionally, catalyzes the hydrolysis of inorganic pyrophosphate (PPi) forming two phosphate ions. The sequence is that of Inorganic pyrophosphatase from Xylella fastidiosa (strain 9a5c).